The following is a 158-amino-acid chain: MTDNARARKLADRIQVVVAETLDRRIKDPRLGFVTITDARVTGDLREATVFYTVYGDDEERAASAAALESAKGVLRSEVGRQTGVRFTPTLAFVPDALPDNARTIEDLLDKARAKDAEVRQVSTGAQYAGDADPYRKPEDEDEETDGSSEKNEGPASA.

Positions 114–158 (AKDAEVRQVSTGAQYAGDADPYRKPEDEDEETDGSSEKNEGPASA) are disordered. The span at 148–158 (SSEKNEGPASA) shows a compositional bias: basic and acidic residues.

Belongs to the RbfA family. Monomer. Binds 30S ribosomal subunits, but not 50S ribosomal subunits or 70S ribosomes.

Its subcellular location is the cytoplasm. Functionally, one of several proteins that assist in the late maturation steps of the functional core of the 30S ribosomal subunit. Associates with free 30S ribosomal subunits (but not with 30S subunits that are part of 70S ribosomes or polysomes). Required for efficient processing of 16S rRNA. May interact with the 5'-terminal helix region of 16S rRNA. In Streptomyces griseus subsp. griseus (strain JCM 4626 / CBS 651.72 / NBRC 13350 / KCC S-0626 / ISP 5235), this protein is Ribosome-binding factor A.